Reading from the N-terminus, the 240-residue chain is Protein Thf1 (240 aa).

Positions 186–222 (KDLDLYRSNLEKVDQLLKVLEDAAEAERKKKEKQAAS) form a coiled coil. Positions 212–240 (ERKKKEKQAASTTPAIEEAPVTTAESSES) are disordered.

It belongs to the THF1 family.

In terms of biological role, may be involved in photosynthetic membrane biogenesis. The protein is Protein Thf1 of Synechocystis sp. (strain ATCC 27184 / PCC 6803 / Kazusa).